A 405-amino-acid polypeptide reads, in one-letter code: Deoxyguanosinetriphosphate triphosphohydrolase-like protein (405 aa).

One can recognise an HD domain in the interval 75–219 (RLTHTIEVAQ…AAIADDIAYN (145 aa)).

Belongs to the dGTPase family. Type 2 subfamily.

This chain is Deoxyguanosinetriphosphate triphosphohydrolase-like protein, found in Rhizobium meliloti (strain 1021) (Ensifer meliloti).